A 725-amino-acid chain; its full sequence is ATP-dependent rRNA helicase SPB4 (725 aa).

The Q motif signature appears at 15 to 43; the sequence is WAKLNPPLSPWILDVINSMGFKNMTPVQA. One can recognise a Helicase ATP-binding domain in the interval 46–260; sequence IPRAVKNQDC…GLGLRNPVRI (215 aa). 59-66 contacts ATP; the sequence is AVTGSGKT. Residues 119 to 156 form a disordered region; sequence ESEEETGDVEAHAPPFASSSRSPSPQTPDKPLFPLPML. A compositionally biased stretch (low complexity) spans 132-142; the sequence is PPFASSSRSPS. The span at 143 to 152 shows a compositional bias: pro residues; it reads PQTPDKPLFP. A DEAD box motif is present at residues 207 to 210; it reads DEAD. A Helicase C-terminal domain is found at 295-458; the sequence is KTLQLIRLLL…YINAYLEEVD (164 aa). Residues 591–725 are disordered; it reads AQRADNQSSN…IGGGMFDDLE (135 aa). Composition is skewed to basic and acidic residues over residues 603–646 and 685–707; these read ARAE…KYEW and EIGKEYKSLKREIKEEKSVKESS. The span at 709-725 shows a compositional bias: gly residues; that stretch reads GGAGGGGIGGGMFDDLE.

Belongs to the DEAD box helicase family. DDX55/SPB4 subfamily. In terms of assembly, component of pre-60S ribosomal complexes.

It localises to the nucleus. It is found in the nucleolus. It carries out the reaction ATP + H2O = ADP + phosphate + H(+). ATP-binding RNA helicase involved in the biogenesis of 60S ribosomal subunits. Binds 90S pre-ribosomal particles and dissociates from pre-60S ribosomal particles after processing of 27SB pre-rRNA. Required for the normal formation of 18S rRNA through the processing of pre-rRNAs at sites A0, A1 and A2, and the normal formation of 25S and 5.8S rRNAs through the processing of pre-rRNAs at sites C1 and C2. The polypeptide is ATP-dependent rRNA helicase SPB4 (Cryptococcus neoformans var. neoformans serotype D (strain JEC21 / ATCC MYA-565) (Filobasidiella neoformans)).